A 526-amino-acid polypeptide reads, in one-letter code: Nucleolar complex protein 4 homolog A (526 aa).

3 helical membrane-spanning segments follow: residues 307-327 (AAYD…FILI), 358-378 (FFHL…LVAA), and 386-406 (LALT…CNLI).

It belongs to the CBF/MAK21 family.

It localises to the nucleus membrane. Its subcellular location is the nucleus. It is found in the nucleolus. This is Nucleolar complex protein 4 homolog A (noc4l-a) from Xenopus laevis (African clawed frog).